Here is a 396-residue protein sequence, read N- to C-terminus: Elongation factor Tu (396 aa).

The 197-residue stretch at 10-206 folds into the tr-type G domain; the sequence is KPHVNVGTIG…TLDEYIPEPE (197 aa). A G1 region spans residues 19–26; the sequence is GHVDHGKT. 19–26 serves as a coordination point for GTP; sequence GHVDHGKT. Threonine 26 contacts Mg(2+). A G2 region spans residues 60-64; it reads GITIA. A G3 region spans residues 81-84; that stretch reads DCPG. GTP-binding positions include 81–85 and 136–139; these read DCPGH and NKAD. Positions 136–139 are G4; that stretch reads NKAD. A G5 region spans residues 174–176; the sequence is SAL.

Belongs to the TRAFAC class translation factor GTPase superfamily. Classic translation factor GTPase family. EF-Tu/EF-1A subfamily. Monomer.

It localises to the cytoplasm. It carries out the reaction GTP + H2O = GDP + phosphate + H(+). GTP hydrolase that promotes the GTP-dependent binding of aminoacyl-tRNA to the A-site of ribosomes during protein biosynthesis. This is Elongation factor Tu from Alcanivorax borkumensis (strain ATCC 700651 / DSM 11573 / NCIMB 13689 / SK2).